A 250-amino-acid polypeptide reads, in one-letter code: Ubiquinone/menaquinone biosynthesis C-methyltransferase UbiE (250 aa).

S-adenosyl-L-methionine contacts are provided by residues Ser-73, Asp-94, and 122–123 (NA).

The protein belongs to the class I-like SAM-binding methyltransferase superfamily. MenG/UbiE family.

It carries out the reaction a 2-demethylmenaquinol + S-adenosyl-L-methionine = a menaquinol + S-adenosyl-L-homocysteine + H(+). It catalyses the reaction a 2-methoxy-6-(all-trans-polyprenyl)benzene-1,4-diol + S-adenosyl-L-methionine = a 5-methoxy-2-methyl-3-(all-trans-polyprenyl)benzene-1,4-diol + S-adenosyl-L-homocysteine + H(+). The protein operates within quinol/quinone metabolism; menaquinone biosynthesis; menaquinol from 1,4-dihydroxy-2-naphthoate: step 2/2. Its pathway is cofactor biosynthesis; ubiquinone biosynthesis. Functionally, methyltransferase required for the conversion of demethylmenaquinol (DMKH2) to menaquinol (MKH2) and the conversion of 2-polyprenyl-6-methoxy-1,4-benzoquinol (DDMQH2) to 2-polyprenyl-3-methyl-6-methoxy-1,4-benzoquinol (DMQH2). The sequence is that of Ubiquinone/menaquinone biosynthesis C-methyltransferase UbiE from Legionella pneumophila (strain Corby).